The primary structure comprises 428 residues: Peptidase B (428 aa).

Mn(2+) contacts are provided by Lys195 and Asp200. The active site involves Lys207. Mn(2+) contacts are provided by Asp218, Asp277, and Glu279. Residue Arg281 is part of the active site.

It belongs to the peptidase M17 family. As to quaternary structure, homohexamer. Mn(2+) is required as a cofactor.

Its subcellular location is the cytoplasm. It carries out the reaction Release of an N-terminal amino acid, Xaa, from a peptide or arylamide. Xaa is preferably Glu or Asp but may be other amino acids, including Leu, Met, His, Cys and Gln.. In terms of biological role, probably plays an important role in intracellular peptide degradation. The sequence is that of Peptidase B from Klebsiella pneumoniae subsp. pneumoniae (strain ATCC 700721 / MGH 78578).